We begin with the raw amino-acid sequence, 92 residues long: Large ribosomal subunit protein eL43 (92 aa).

The C4-type zinc-finger motif lies at C39–C60.

It belongs to the eukaryotic ribosomal protein eL43 family.

The protein is Large ribosomal subunit protein eL43 (RPL37A) of Cryptochiton stelleri (Giant gumboot chiton).